A 316-amino-acid chain; its full sequence is ATP synthase gamma chain (316 aa).

It belongs to the ATPase gamma chain family. As to quaternary structure, F-type ATPases have 2 components, CF(1) - the catalytic core - and CF(0) - the membrane proton channel. CF(1) has five subunits: alpha(3), beta(3), gamma(1), delta(1), epsilon(1). CF(0) has three main subunits: a, b and c.

It is found in the cellular thylakoid membrane. Functionally, produces ATP from ADP in the presence of a proton gradient across the membrane. The gamma chain is believed to be important in regulating ATPase activity and the flow of protons through the CF(0) complex. The polypeptide is ATP synthase gamma chain (Prochlorococcus marinus (strain MIT 9515)).